A 181-amino-acid polypeptide reads, in one-letter code: MSIDALKERIPDFAKDVRLNLSSMASDETLAPQTKYGLFVAAAVATRNPDVIAAMQAVARDNVAPAVIAAAKSAAAIMAMNNVYYRFVHLASNKDYATMPARLRMNVIANPGVDKADFELWSLAVSAINGCGMCIDSHEKVLLAAGVSTAAIQTAVRFAAIIQSVAVSIEAGAADLAMAAE.

Cys-131 functions as the Proton donor in the catalytic mechanism. A disulfide bridge links Cys-131 with Cys-134. The active-site Cysteine sulfenic acid (-SOH) intermediate is the Cys-134.

It belongs to the AhpD family.

It catalyses the reaction N(6)-[(R)-dihydrolipoyl]-L-lysyl-[lipoyl-carrier protein] + a hydroperoxide = N(6)-[(R)-lipoyl]-L-lysyl-[lipoyl-carrier protein] + an alcohol + H2O. Functionally, antioxidant protein with alkyl hydroperoxidase activity. Required for the reduction of the AhpC active site cysteine residues and for the regeneration of the AhpC enzyme activity. The chain is Alkyl hydroperoxide reductase AhpD from Rhodopseudomonas palustris (strain BisB18).